Here is a 91-residue protein sequence, read N- to C-terminus: Small ribosomal subunit protein uS15 (91 aa).

It belongs to the universal ribosomal protein uS15 family. Part of the 30S ribosomal subunit. Forms a bridge to the 50S subunit in the 70S ribosome, contacting the 23S rRNA.

Functionally, one of the primary rRNA binding proteins, it binds directly to 16S rRNA where it helps nucleate assembly of the platform of the 30S subunit by binding and bridging several RNA helices of the 16S rRNA. In terms of biological role, forms an intersubunit bridge (bridge B4) with the 23S rRNA of the 50S subunit in the ribosome. This is Small ribosomal subunit protein uS15 from Cytophaga hutchinsonii (strain ATCC 33406 / DSM 1761 / CIP 103989 / NBRC 15051 / NCIMB 9469 / D465).